We begin with the raw amino-acid sequence, 500 residues long: Glycerol kinase (500 aa).

Threonine 11 serves as a coordination point for ADP. Residues threonine 11, threonine 12, and serine 13 each coordinate ATP. A sn-glycerol 3-phosphate-binding site is contributed by threonine 11. Arginine 15 provides a ligand contact to ADP. Residues arginine 81, glutamate 82, tyrosine 133, and aspartate 242 each coordinate sn-glycerol 3-phosphate. Glycerol contacts are provided by arginine 81, glutamate 82, tyrosine 133, aspartate 242, and glutamine 243. ADP-binding residues include threonine 264 and glycine 307. Residues threonine 264, glycine 307, glutamine 311, and glycine 411 each coordinate ATP. An ADP-binding site is contributed by glycine 411.

This sequence belongs to the FGGY kinase family.

The enzyme catalyses glycerol + ATP = sn-glycerol 3-phosphate + ADP + H(+). The protein operates within polyol metabolism; glycerol degradation via glycerol kinase pathway; sn-glycerol 3-phosphate from glycerol: step 1/1. Its activity is regulated as follows. Inhibited by fructose 1,6-bisphosphate (FBP). Key enzyme in the regulation of glycerol uptake and metabolism. Catalyzes the phosphorylation of glycerol to yield sn-glycerol 3-phosphate. The chain is Glycerol kinase from Rhodopseudomonas palustris (strain ATCC BAA-98 / CGA009).